The primary structure comprises 88 residues: Small ribosomal subunit protein uS15 (88 aa).

Belongs to the universal ribosomal protein uS15 family. As to quaternary structure, part of the 30S ribosomal subunit. Forms a bridge to the 50S subunit in the 70S ribosome, contacting the 23S rRNA.

Its function is as follows. One of the primary rRNA binding proteins, it binds directly to 16S rRNA where it helps nucleate assembly of the platform of the 30S subunit by binding and bridging several RNA helices of the 16S rRNA. In terms of biological role, forms an intersubunit bridge (bridge B4) with the 23S rRNA of the 50S subunit in the ribosome. The protein is Small ribosomal subunit protein uS15 of Mesoplasma florum (strain ATCC 33453 / NBRC 100688 / NCTC 11704 / L1) (Acholeplasma florum).